The sequence spans 434 residues: Methylenetetrahydrofolate--tRNA-(uracil-5-)-methyltransferase TrmFO (434 aa).

10–15 contributes to the FAD binding site; that stretch reads GAGLAG.

The protein belongs to the MnmG family. TrmFO subfamily. Requires FAD as cofactor.

It localises to the cytoplasm. The catalysed reaction is uridine(54) in tRNA + (6R)-5,10-methylene-5,6,7,8-tetrahydrofolate + NADH + H(+) = 5-methyluridine(54) in tRNA + (6S)-5,6,7,8-tetrahydrofolate + NAD(+). The enzyme catalyses uridine(54) in tRNA + (6R)-5,10-methylene-5,6,7,8-tetrahydrofolate + NADPH + H(+) = 5-methyluridine(54) in tRNA + (6S)-5,6,7,8-tetrahydrofolate + NADP(+). Its function is as follows. Catalyzes the folate-dependent formation of 5-methyl-uridine at position 54 (M-5-U54) in all tRNAs. In Bacillus cytotoxicus (strain DSM 22905 / CIP 110041 / 391-98 / NVH 391-98), this protein is Methylenetetrahydrofolate--tRNA-(uracil-5-)-methyltransferase TrmFO.